The primary structure comprises 111 residues: Protein BEX5 (111 aa).

A compositionally biased stretch (basic and acidic residues) spans M1–E12. Residues M1–G37 are disordered. Residues H100–H104 are his cluster. C108 provides a ligand contact to Zn(2+).

Belongs to the BEX family. Post-translationally, ubiquitinated. Degraded by the proteasome.

The protein localises to the cytoplasm. This Homo sapiens (Human) protein is Protein BEX5 (BEX5).